Reading from the N-terminus, the 319-residue chain is Aspartate carbamoyltransferase catalytic subunit (319 aa).

2 residues coordinate carbamoyl phosphate: Arg-57 and Thr-58. Residue Lys-85 participates in L-aspartate binding. Residues Arg-107, His-140, and Gln-143 each contribute to the carbamoyl phosphate site. L-aspartate is bound by residues Arg-173 and Arg-227. Gly-268 and Pro-269 together coordinate carbamoyl phosphate.

This sequence belongs to the aspartate/ornithine carbamoyltransferase superfamily. ATCase family. In terms of assembly, heterododecamer (2C3:3R2) of six catalytic PyrB chains organized as two trimers (C3), and six regulatory PyrI chains organized as three dimers (R2).

It carries out the reaction carbamoyl phosphate + L-aspartate = N-carbamoyl-L-aspartate + phosphate + H(+). Its pathway is pyrimidine metabolism; UMP biosynthesis via de novo pathway; (S)-dihydroorotate from bicarbonate: step 2/3. Functionally, catalyzes the condensation of carbamoyl phosphate and aspartate to form carbamoyl aspartate and inorganic phosphate, the committed step in the de novo pyrimidine nucleotide biosynthesis pathway. The polypeptide is Aspartate carbamoyltransferase catalytic subunit (Mycobacterium tuberculosis (strain ATCC 25177 / H37Ra)).